Here is a 90-residue protein sequence, read N- to C-terminus: Probable Fe(2+)-trafficking protein (90 aa).

This sequence belongs to the Fe(2+)-trafficking protein family.

Functionally, could be a mediator in iron transactions between iron acquisition and iron-requiring processes, such as synthesis and/or repair of Fe-S clusters in biosynthetic enzymes. The chain is Probable Fe(2+)-trafficking protein from Paracidovorax citrulli (strain AAC00-1) (Acidovorax citrulli).